The following is a 159-amino-acid chain: Endoribonuclease YbeY (159 aa).

Zn(2+) contacts are provided by His-125, His-129, and His-135.

The protein belongs to the endoribonuclease YbeY family. It depends on Zn(2+) as a cofactor.

Its subcellular location is the cytoplasm. Its function is as follows. Single strand-specific metallo-endoribonuclease involved in late-stage 70S ribosome quality control and in maturation of the 3' terminus of the 16S rRNA. This Brevibacillus brevis (strain 47 / JCM 6285 / NBRC 100599) protein is Endoribonuclease YbeY.